Here is a 22-residue protein sequence, read N- to C-terminus: Motilin (22 aa).

Positions 1-22 (FVPIFTHSELQKIREKERNKGQ) are disordered. Residues 9 to 22 (ELQKIREKERNKGQ) are compositionally biased toward basic and acidic residues.

Belongs to the motilin family.

It is found in the secreted. Its function is as follows. Plays an important role in the regulation of interdigestive gastrointestinal motility and indirectly causes rhythmic contraction of duodenal and colonic smooth muscle. The sequence is that of Motilin (MLN) from Canis lupus familiaris (Dog).